The primary structure comprises 247 residues: MDAFTRFTNQTQGRDRLFRATQYTCMLLRYLLEPKAGKEKVVMKLKKLESSVSTGRKWFRLGNVVHAIQATEQSIHATDLVPRLCLTLANLNRVIYFICDTILWVRSVGLTSGINKEKWRTRAAHHYYYSLLLSLVRDLYEISLQMKRVTCDRAKKEKSASQDPLWFSVAEEETEWLQSFLLLLFRSLKQHPPLLLDTVKNLCDILNPLDQLGIYKSNPGIIGLGGLVSSIAGMITVAYPQMKLKTR.

The Cytoplasmic portion of the chain corresponds to M1–R83. A helical transmembrane segment spans residues L84 to V105. The Lumenal segment spans residues R106–P219. A helical membrane pass occupies residues G220–Y239. The interval G220–Y239 is required for homodimerization, interaction with PEX11G, and peroxisomal localization. Over P240–R247 the chain is Cytoplasmic.

The protein belongs to the peroxin-11 family. Homodimer. Heterodimer with PEX11G. Probably interacts with COPB2 and COPA. Interacts with PEX19. Interacts with FIS1. Post-translationally, seems not to be N-glycosylated.

It is found in the peroxisome membrane. May be involved in peroxisomal proliferation and may regulate peroxisomes division. May mediate binding of coatomer proteins to the peroxisomal membrane. Promotes membrane protrusion and elongation on the peroxisomal surface. The sequence is that of Peroxisomal membrane protein 11A (PEX11A) from Homo sapiens (Human).